The following is a 473-amino-acid chain: Photosystem II CP43 reaction center protein (473 aa).

The propeptide occupies 1 to 14 (MKTLYSLRRFYHVE). Threonine 15 carries the post-translational modification N-acetylthreonine. The residue at position 15 (threonine 15) is a Phosphothreonine. Helical transmembrane passes span 69 to 93 (LFEV…PHLA), 134 to 155 (LLGP…KDRN), 178 to 200 (KALY…RKIT), 255 to 275 (KPFA…LSYS), and 291 to 312 (WFNN…ASQA). Glutamate 367 provides a ligand contact to [CaMn4O5] cluster. A helical membrane pass occupies residues 447-471 (RARAAAAGFEKGIDRDFEPVLFMTP).

Belongs to the PsbB/PsbC family. PsbC subfamily. In terms of assembly, PSII is composed of 1 copy each of membrane proteins PsbA, PsbB, PsbC, PsbD, PsbE, PsbF, PsbH, PsbI, PsbJ, PsbK, PsbL, PsbM, PsbT, PsbX, PsbY, PsbZ, Psb30/Ycf12, at least 3 peripheral proteins of the oxygen-evolving complex and a large number of cofactors. It forms dimeric complexes. Binds multiple chlorophylls and provides some of the ligands for the Ca-4Mn-5O cluster of the oxygen-evolving complex. It may also provide a ligand for a Cl- that is required for oxygen evolution. PSII binds additional chlorophylls, carotenoids and specific lipids. is required as a cofactor.

The protein localises to the plastid. Its subcellular location is the chloroplast thylakoid membrane. Functionally, one of the components of the core complex of photosystem II (PSII). It binds chlorophyll and helps catalyze the primary light-induced photochemical processes of PSII. PSII is a light-driven water:plastoquinone oxidoreductase, using light energy to abstract electrons from H(2)O, generating O(2) and a proton gradient subsequently used for ATP formation. The protein is Photosystem II CP43 reaction center protein of Solanum tuberosum (Potato).